Consider the following 707-residue polypeptide: U-box domain-containing protein 2 (707 aa).

The 75-residue stretch at 239–313 (RVPSDFRCSL…ASWCETNNVY (75 aa)) folds into the U-box domain. 5 ARM repeats span residues 453-492 (TDNR…NLSI), 494-534 (DNNK…SLSV), 536-575 (EEYK…NLSI), 577-615 (HENK…NLAT), and 617-656 (REGK…QLCT).

It carries out the reaction S-ubiquitinyl-[E2 ubiquitin-conjugating enzyme]-L-cysteine + [acceptor protein]-L-lysine = [E2 ubiquitin-conjugating enzyme]-L-cysteine + N(6)-ubiquitinyl-[acceptor protein]-L-lysine.. It functions in the pathway protein modification; protein ubiquitination. Functionally, functions as an E3 ubiquitin ligase. This is U-box domain-containing protein 2 (PUB2) from Arabidopsis thaliana (Mouse-ear cress).